The following is a 169-amino-acid chain: Transcription antitermination protein NusB (169 aa).

The disordered stretch occupies residues 147–169; the sequence is RGLIDQSFSRPQKPESEATEIEE.

It belongs to the NusB family.

Involved in transcription antitermination. Required for transcription of ribosomal RNA (rRNA) genes. Binds specifically to the boxA antiterminator sequence of the ribosomal RNA (rrn) operons. The protein is Transcription antitermination protein NusB of Chlorobium chlorochromatii (strain CaD3).